Consider the following 424-residue polypeptide: 5-methylthioadenosine/S-adenosylhomocysteine deaminase (424 aa).

Zn(2+) contacts are provided by His-60 and His-62. Substrate contacts are provided by Glu-89 and His-181. His-208 is a binding site for Zn(2+). Positions 211 and 296 each coordinate substrate. Asp-296 provides a ligand contact to Zn(2+).

Belongs to the metallo-dependent hydrolases superfamily. MTA/SAH deaminase family. Requires Zn(2+) as cofactor.

The enzyme catalyses S-adenosyl-L-homocysteine + H2O + H(+) = S-inosyl-L-homocysteine + NH4(+). The catalysed reaction is S-methyl-5'-thioadenosine + H2O + H(+) = S-methyl-5'-thioinosine + NH4(+). Its function is as follows. Catalyzes the deamination of 5-methylthioadenosine and S-adenosyl-L-homocysteine into 5-methylthioinosine and S-inosyl-L-homocysteine, respectively. Is also able to deaminate adenosine. This chain is 5-methylthioadenosine/S-adenosylhomocysteine deaminase, found in Thermococcus onnurineus (strain NA1).